The following is a 149-amino-acid chain: Large ribosomal subunit protein bL9 (149 aa).

An N6-acetyllysine modification is found at Lys89.

This sequence belongs to the bacterial ribosomal protein bL9 family.

Functionally, binds to the 23S rRNA. The sequence is that of Large ribosomal subunit protein bL9 from Shigella boydii serotype 18 (strain CDC 3083-94 / BS512).